Here is a 429-residue protein sequence, read N- to C-terminus: Adenylosuccinate synthetase (429 aa).

Residues 11-17 (GDEGKGK) and 39-41 (GHT) contribute to the GTP site. Asp12 serves as the catalytic Proton acceptor. Residues Asp12 and Gly39 each coordinate Mg(2+). IMP is bound by residues 12-15 (DEGK), 37-40 (NAGH), Thr130, Arg144, Asn226, Thr241, and Arg305. The Proton donor role is filled by His40. 301 to 307 (VTTGRRR) is a binding site for substrate. Residues Arg307, 333 to 335 (KLD), and 415 to 417 (GVG) contribute to the GTP site.

This sequence belongs to the adenylosuccinate synthetase family. In terms of assembly, homodimer. It depends on Mg(2+) as a cofactor.

It localises to the cytoplasm. It catalyses the reaction IMP + L-aspartate + GTP = N(6)-(1,2-dicarboxyethyl)-AMP + GDP + phosphate + 2 H(+). The protein operates within purine metabolism; AMP biosynthesis via de novo pathway; AMP from IMP: step 1/2. Its function is as follows. Plays an important role in the de novo pathway and in the salvage pathway of purine nucleotide biosynthesis. Catalyzes the first committed step in the biosynthesis of AMP from IMP. This Yarrowia lipolytica (strain CLIB 122 / E 150) (Yeast) protein is Adenylosuccinate synthetase.